Reading from the N-terminus, the 344-residue chain is Ferrochelatase (344 aa).

Fe cation contacts are provided by histidine 214 and glutamate 295.

It belongs to the ferrochelatase family.

The protein localises to the cytoplasm. The enzyme catalyses heme b + 2 H(+) = protoporphyrin IX + Fe(2+). Its pathway is porphyrin-containing compound metabolism; protoheme biosynthesis; protoheme from protoporphyrin-IX: step 1/1. Its function is as follows. Catalyzes the ferrous insertion into protoporphyrin IX. The chain is Ferrochelatase from Rhizobium johnstonii (strain DSM 114642 / LMG 32736 / 3841) (Rhizobium leguminosarum bv. viciae).